A 433-amino-acid chain; its full sequence is 3-phosphoshikimate 1-carboxyvinyltransferase (433 aa).

Positions 22, 23, and 27 each coordinate 3-phosphoshikimate. Position 22 (Lys-22) interacts with phosphoenolpyruvate. The phosphoenolpyruvate site is built by Gly-95 and Arg-123. Positions 167, 169, 315, and 342 each coordinate 3-phosphoshikimate. Phosphoenolpyruvate is bound at residue Gln-169. The Proton acceptor role is filled by Asp-315. 2 residues coordinate phosphoenolpyruvate: Arg-346 and Arg-387.

The protein belongs to the EPSP synthase family. Monomer.

The protein resides in the cytoplasm. The enzyme catalyses 3-phosphoshikimate + phosphoenolpyruvate = 5-O-(1-carboxyvinyl)-3-phosphoshikimate + phosphate. It participates in metabolic intermediate biosynthesis; chorismate biosynthesis; chorismate from D-erythrose 4-phosphate and phosphoenolpyruvate: step 6/7. Functionally, catalyzes the transfer of the enolpyruvyl moiety of phosphoenolpyruvate (PEP) to the 5-hydroxyl of shikimate-3-phosphate (S3P) to produce enolpyruvyl shikimate-3-phosphate and inorganic phosphate. The polypeptide is 3-phosphoshikimate 1-carboxyvinyltransferase (Legionella pneumophila subsp. pneumophila (strain Philadelphia 1 / ATCC 33152 / DSM 7513)).